We begin with the raw amino-acid sequence, 413 residues long: Enolase (413 aa).

A (2R)-2-phosphoglycerate-binding site is contributed by Gln-170. Glu-212 acts as the Proton donor in catalysis. Asp-245, Glu-286, and Asp-313 together coordinate Mg(2+). (2R)-2-phosphoglycerate-binding residues include Lys-338, Arg-367, Ser-368, and Lys-389. Lys-338 functions as the Proton acceptor in the catalytic mechanism.

It belongs to the enolase family. Requires Mg(2+) as cofactor.

Its subcellular location is the cytoplasm. The protein resides in the secreted. It is found in the cell surface. The catalysed reaction is (2R)-2-phosphoglycerate = phosphoenolpyruvate + H2O. It functions in the pathway carbohydrate degradation; glycolysis; pyruvate from D-glyceraldehyde 3-phosphate: step 4/5. Catalyzes the reversible conversion of 2-phosphoglycerate (2-PG) into phosphoenolpyruvate (PEP). It is essential for the degradation of carbohydrates via glycolysis. This chain is Enolase, found in Neorickettsia sennetsu (strain ATCC VR-367 / Miyayama) (Ehrlichia sennetsu).